The primary structure comprises 405 residues: Envelope glycoprotein M (405 aa).

The Intravirion segment spans residues 1-17 (MKSSKNDTFVYRTWVKT). The chain crosses the membrane as a helical span at residues 18–38 (LVVYFVMFVMSAVVPITAMFP). At 39–76 (NLGYPCYFNALVDYGALNLTNYNLAHHLTPTLYLEPPE) the chain is on the virion surface side. A helical membrane pass occupies residues 77–97 (MFVYITLVFIADCVAFIYYAC). Residues 98-121 (GEVALIKARKKVSGLTDLSAWVSA) are Intravirion-facing. Residues 122-142 (VGSPTVLFLAILKLWSIQVFI) traverse the membrane as a helical segment. At 143–149 (QVLSYKH) the chain is on the virion surface side. The chain crosses the membrane as a helical span at residues 150-170 (VFLSAFVYFLHFLASVLHACA). Residues 171–192 (CVTRFSPVWVVKAQDNSIPQDT) lie on the Intravirion side of the membrane. Residues 193–215 (FLWWVVFYLKPVVTNLYLGCLAL) form a helical membrane-spanning segment. At 216 to 245 (ETLVFSLSVFLALGNSFYFMVGDMVLGAVN) the chain is on the virion surface side. A helical membrane pass occupies residues 246–266 (LFLILPIFWYILTEVWLASFL). A topological domain (intravirion) is located at residue arginine 267. The helical transmembrane segment at 268 to 288 (HNFGFYCGMFIASIILILPLV) threads the bilayer. At 289–299 (RYEAVFVSAKL) the chain is on the virion surface side. Residues 300–320 (HTTVAINVAIIPILCSVAMLI) form a helical membrane-spanning segment. Over 321 to 405 (RICRIFKSMR…TTDSEEEIFP (85 aa)) the chain is Intravirion. The interval 346-405 (LESEPRPRPSRTPSPGRNRRRSSTSSSSSRSTRRQRPVSTQALVSSVLPMTTDSEEEIFP) is disordered. Positions 386 to 397 (QALVSSVLPMTT) are enriched in polar residues.

Belongs to the herpesviridae glycoprotein M family. As to quaternary structure, interacts (via N-terminus) with gN (via N-terminus). The gM-gN heterodimer forms the gCII complex.

The protein resides in the virion membrane. It localises to the host Golgi apparatus. The protein localises to the host trans-Golgi network. Its subcellular location is the host endosome membrane. It is found in the host nucleus inner membrane. Functionally, envelope glycoprotein important for virion assembly and egress. Plays a role in the correct incorporation of gH-gL into virion membrane. Directs the glycoprotein N (gN) to the host trans-Golgi network. The protein is Envelope glycoprotein M of Epstein-Barr virus (strain B95-8) (HHV-4).